The chain runs to 259 residues: 7-cyano-7-deazaguanine synthase (259 aa).

L32–L42 lines the ATP pocket. Zn(2+) contacts are provided by C223, C233, C236, and C239.

The protein belongs to the QueC family. It depends on Zn(2+) as a cofactor.

The catalysed reaction is 7-carboxy-7-deazaguanine + NH4(+) + ATP = 7-cyano-7-deazaguanine + ADP + phosphate + H2O + H(+). It participates in purine metabolism; 7-cyano-7-deazaguanine biosynthesis. Its function is as follows. Catalyzes the ATP-dependent conversion of 7-carboxy-7-deazaguanine (CDG) to 7-cyano-7-deazaguanine (preQ(0)). This Psychrobacter arcticus (strain DSM 17307 / VKM B-2377 / 273-4) protein is 7-cyano-7-deazaguanine synthase.